The sequence spans 318 residues: 4-diphosphocytidyl-2-C-methyl-D-erythritol kinase (318 aa).

Residue K13 is part of the active site. 101-111 (PVAGGMAGGSA) provides a ligand contact to ATP. Residue D143 is part of the active site. The segment at 298-318 (PGARLVTDDRADRPTPPQVHA) is disordered.

Belongs to the GHMP kinase family. IspE subfamily.

The enzyme catalyses 4-CDP-2-C-methyl-D-erythritol + ATP = 4-CDP-2-C-methyl-D-erythritol 2-phosphate + ADP + H(+). It functions in the pathway isoprenoid biosynthesis; isopentenyl diphosphate biosynthesis via DXP pathway; isopentenyl diphosphate from 1-deoxy-D-xylulose 5-phosphate: step 3/6. In terms of biological role, catalyzes the phosphorylation of the position 2 hydroxy group of 4-diphosphocytidyl-2C-methyl-D-erythritol. The sequence is that of 4-diphosphocytidyl-2-C-methyl-D-erythritol kinase from Saccharopolyspora erythraea (strain ATCC 11635 / DSM 40517 / JCM 4748 / NBRC 13426 / NCIMB 8594 / NRRL 2338).